The chain runs to 203 residues: DNA-directed RNA polymerase subunit gamma (203 aa).

Positions 34, 36, 49, and 52 each coordinate Zn(2+).

This sequence belongs to the RNA polymerase beta' chain family. RpoC1 subfamily. As to quaternary structure, in cyanobacteria the RNAP catalytic core is composed of 2 alpha, 1 beta, 1 beta', 1 gamma and 1 omega subunit. When a sigma factor is associated with the core the holoenzyme is formed, which can initiate transcription. Zn(2+) serves as cofactor.

It carries out the reaction RNA(n) + a ribonucleoside 5'-triphosphate = RNA(n+1) + diphosphate. In terms of biological role, DNA-dependent RNA polymerase catalyzes the transcription of DNA into RNA using the four ribonucleoside triphosphates as substrates. The sequence is that of DNA-directed RNA polymerase subunit gamma (rpoC1) from Prochloron sp.